Consider the following 132-residue polypeptide: Small ribosomal subunit protein uS8c (132 aa).

Belongs to the universal ribosomal protein uS8 family. Part of the 30S ribosomal subunit.

It is found in the plastid. The protein localises to the chloroplast. Functionally, one of the primary rRNA binding proteins, it binds directly to 16S rRNA central domain where it helps coordinate assembly of the platform of the 30S subunit. The protein is Small ribosomal subunit protein uS8c (rps8) of Zygnema circumcarinatum (Green alga).